Reading from the N-terminus, the 1382-residue chain is DNA-directed RNA polymerase subunit beta' (1382 aa).

Zn(2+) contacts are provided by cysteine 70, cysteine 72, cysteine 85, and cysteine 88. Mg(2+) is bound by residues aspartate 460, aspartate 462, and aspartate 464. Cysteine 808, cysteine 882, cysteine 889, and cysteine 892 together coordinate Zn(2+).

This sequence belongs to the RNA polymerase beta' chain family. As to quaternary structure, the RNAP catalytic core consists of 2 alpha, 1 beta, 1 beta' and 1 omega subunit. When a sigma factor is associated with the core the holoenzyme is formed, which can initiate transcription. The cofactor is Mg(2+). Zn(2+) serves as cofactor.

The catalysed reaction is RNA(n) + a ribonucleoside 5'-triphosphate = RNA(n+1) + diphosphate. Its function is as follows. DNA-dependent RNA polymerase catalyzes the transcription of DNA into RNA using the four ribonucleoside triphosphates as substrates. The sequence is that of DNA-directed RNA polymerase subunit beta' from Geobacter sp. (strain M21).